The chain runs to 123 residues: Large ribosomal subunit protein bL12 (123 aa).

This sequence belongs to the bacterial ribosomal protein bL12 family. Homodimer. Part of the ribosomal stalk of the 50S ribosomal subunit. Forms a multimeric L10(L12)X complex, where L10 forms an elongated spine to which 2 to 4 L12 dimers bind in a sequential fashion. Binds GTP-bound translation factors.

Functionally, forms part of the ribosomal stalk which helps the ribosome interact with GTP-bound translation factors. Is thus essential for accurate translation. The sequence is that of Large ribosomal subunit protein bL12 from Shewanella sp. (strain ANA-3).